The following is a 441-amino-acid chain: Ribosomal protein uS12 methylthiotransferase RimO (441 aa).

The region spanning 7–117 (PKISFVSLGC…VLDAVHRAKP (111 aa)) is the MTTase N-terminal domain. Residues cysteine 16, cysteine 52, cysteine 81, cysteine 148, cysteine 152, and cysteine 155 each coordinate [4Fe-4S] cluster. Residues 134–371 (LTPRHYAYLK…MARQQAISAR (238 aa)) enclose the Radical SAM core domain. Residues 374–440 (KRKVGTRQQI…AYDLHGTVAG (67 aa)) form the TRAM domain.

Belongs to the methylthiotransferase family. RimO subfamily. It depends on [4Fe-4S] cluster as a cofactor.

The protein localises to the cytoplasm. It catalyses the reaction L-aspartate(89)-[ribosomal protein uS12]-hydrogen + (sulfur carrier)-SH + AH2 + 2 S-adenosyl-L-methionine = 3-methylsulfanyl-L-aspartate(89)-[ribosomal protein uS12]-hydrogen + (sulfur carrier)-H + 5'-deoxyadenosine + L-methionine + A + S-adenosyl-L-homocysteine + 2 H(+). Its function is as follows. Catalyzes the methylthiolation of an aspartic acid residue of ribosomal protein uS12. This chain is Ribosomal protein uS12 methylthiotransferase RimO, found in Rhodopseudomonas palustris (strain HaA2).